The chain runs to 147 residues: Large ribosomal subunit protein uL13 (147 aa).

The protein belongs to the universal ribosomal protein uL13 family. In terms of assembly, part of the 50S ribosomal subunit.

In terms of biological role, this protein is one of the early assembly proteins of the 50S ribosomal subunit, although it is not seen to bind rRNA by itself. It is important during the early stages of 50S assembly. This is Large ribosomal subunit protein uL13 from Rhodococcus erythropolis (strain PR4 / NBRC 100887).